A 124-amino-acid polypeptide reads, in one-letter code: Predicted GPI-anchored protein 11 (124 aa).

The first 18 residues, 1-18, serve as a signal peptide directing secretion; it reads MKFQFVTALALASTMAVA. The interval 38-59 is disordered; it reads REGGSTGAELQDNNQPTAGLFG. Residue serine 107 is the site of GPI-anchor amidated serine attachment. Positions 108–124 are cleaved as a propeptide — removed in mature form; that stretch reads GAAGGVGNLFSGILGGL.

It is found in the cell membrane. The sequence is that of Predicted GPI-anchored protein 11 (PGA11) from Candida albicans (strain SC5314 / ATCC MYA-2876) (Yeast).